The primary structure comprises 373 residues: Flagellar P-ring protein (373 aa).

The N-terminal stretch at 1–28 is a signal peptide; it reads MPRVSTHLVKLAAAALCALLLSAVAASA.

Belongs to the FlgI family. In terms of assembly, the basal body constitutes a major portion of the flagellar organelle and consists of four rings (L,P,S, and M) mounted on a central rod.

The protein resides in the periplasm. The protein localises to the bacterial flagellum basal body. Functionally, assembles around the rod to form the L-ring and probably protects the motor/basal body from shearing forces during rotation. The chain is Flagellar P-ring protein from Rhodopseudomonas palustris (strain ATCC BAA-98 / CGA009).